A 432-amino-acid chain; its full sequence is Enolase (432 aa).

Q166 is a binding site for (2R)-2-phosphoglycerate. Catalysis depends on E208, which acts as the Proton donor. Residues D245, E291, and D318 each coordinate Mg(2+). Residues K343, R372, S373, and K394 each contribute to the (2R)-2-phosphoglycerate site. Residue K343 is the Proton acceptor of the active site.

Belongs to the enolase family. The cofactor is Mg(2+).

It is found in the cytoplasm. The protein resides in the secreted. It localises to the cell surface. It catalyses the reaction (2R)-2-phosphoglycerate = phosphoenolpyruvate + H2O. Its pathway is carbohydrate degradation; glycolysis; pyruvate from D-glyceraldehyde 3-phosphate: step 4/5. In terms of biological role, catalyzes the reversible conversion of 2-phosphoglycerate (2-PG) into phosphoenolpyruvate (PEP). It is essential for the degradation of carbohydrates via glycolysis. The chain is Enolase from Leptospira borgpetersenii serovar Hardjo-bovis (strain L550).